The primary structure comprises 250 residues: Cruxrhodopsin-1 (250 aa).

The Extracellular portion of the chain corresponds to 1–9; that stretch reads MPEPGSEAI. A helical membrane pass occupies residues 10-27; it reads WLWLGTAGMFLGMLYFIA. Over 28–41 the chain is Cytoplasmic; the sequence is RGWGETDSRRQKFY. A helical transmembrane segment spans residues 42–60; that stretch reads IATILITAIAFVNYLAMAL. The Extracellular segment spans residues 61–77; it reads GFGLTIVEFAGEEHPIY. The chain crosses the membrane as a helical span at residues 78 to 94; sequence WARYSDWLFTTPLLLYD. Residues 95-105 are Cytoplasmic-facing; that stretch reads LGLLAGADRNT. A helical membrane pass occupies residues 106–125; it reads ITSLVSLDVLMIGTGLVATL. Topologically, residues 126–138 are extracellular; it reads SPGSGVLSAGAER. A helical transmembrane segment spans residues 139 to 158; sequence LVWWGISTAFLLVLLYFLFS. The Cytoplasmic portion of the chain corresponds to 159–176; it reads SLSGRVADLPSDTRSTFK. Residues 177–195 form a helical membrane-spanning segment; it reads TLRNLVTVVWLVYPVWWLI. Over 196–207 the chain is Extracellular; it reads GTEGIGLVGIGI. A helical transmembrane segment spans residues 208–227; it reads ETAGFMVIDLTAKVGFGIIL. K220 carries the N6-(retinylidene)lysine modification. Residues 228–250 lie on the Cytoplasmic side of the membrane; the sequence is LRSHGVLDGAAETTGTGATPADD.

Belongs to the archaeal/bacterial/fungal opsin family. As to quaternary structure, homotrimer.

The protein resides in the cell membrane. Its function is as follows. Light-driven proton pump. This is Cruxrhodopsin-1 (cop1) from Haloarcula argentinensis.